Here is a 322-residue protein sequence, read N- to C-terminus: CRISPR-associated endonuclease Cas1 (322 aa).

Residues Glu149, His214, and Glu229 each coordinate Mn(2+).

Belongs to the CRISPR-associated endonuclease Cas1 family. Homodimer, forms a heterotetramer with a Cas2 homodimer. Requires Mg(2+) as cofactor. Mn(2+) is required as a cofactor.

Functionally, CRISPR (clustered regularly interspaced short palindromic repeat), is an adaptive immune system that provides protection against mobile genetic elements (viruses, transposable elements and conjugative plasmids). CRISPR clusters contain spacers, sequences complementary to antecedent mobile elements, and target invading nucleic acids. CRISPR clusters are transcribed and processed into CRISPR RNA (crRNA). Acts as a dsDNA endonuclease. Involved in the integration of spacer DNA into the CRISPR cassette. The protein is CRISPR-associated endonuclease Cas1 of Pyrococcus horikoshii (strain ATCC 700860 / DSM 12428 / JCM 9974 / NBRC 100139 / OT-3).